The following is a 423-amino-acid chain: Galactosylceramide sulfotransferase (423 aa).

The Cytoplasmic portion of the chain corresponds to 1-14; sequence MLPPQKKPWESMAK. The helical; Signal-anchor for type II membrane protein transmembrane segment at 15–35 threads the bilayer; that stretch reads GLVLGALFTSFLLLVYSYAVP. The Lumenal segment spans residues 36–423; sequence PLHAGLASTT…WKFIRDFLRW (388 aa). N66 and N312 each carry an N-linked (GlcNAc...) asparagine glycan.

Belongs to the galactose-3-O-sulfotransferase family. As to expression, expressed in kidney proximal tubule, gastric mucosa and adenocarcinoma. Highly expressed in renal cell carcinoma cell lines.

The protein resides in the golgi apparatus membrane. It carries out the reaction a beta-D-galactosyl-(1&lt;-&gt;1')-N-acylsphing-4-enine + 3'-phosphoadenylyl sulfate = an N-acyl-1-beta-D-(3-O-sulfo)-galactosyl-sphing-4-enine + adenosine 3',5'-bisphosphate + H(+). The catalysed reaction is a 1-O-alkyl-2-acyl-3-O-(beta-D-galactosyl)-sn-glycerol + 3'-phosphoadenylyl sulfate = a 1-O-alkyl-2-acyl-3-(beta-D-3-sulfogalactosyl)-sn-glycerol + adenosine 3',5'-bisphosphate + H(+). The enzyme catalyses a beta-D-Gal-(1&lt;-&gt;1')-ceramide + 3'-phosphoadenylyl sulfate = 1-(3-O-sulfo-beta-D-galactosyl)-ceramide + adenosine 3',5'-bisphosphate + H(+). It catalyses the reaction a 1,2-diacyl-3-O-(beta-D-galactosyl)-sn-glycerol + 3'-phosphoadenylyl sulfate = 1,2-diacyl-3-(3-O-sulfo-beta-D-galactosyl)-sn-glycerol + adenosine 3',5'-bisphosphate + H(+). It carries out the reaction a beta-D-Gal-(1-&gt;4)-beta-D-Glc-(1&lt;-&gt;1)-Cer(d18:1(4E)) + 3'-phosphoadenylyl sulfate = beta-D-3-sulfogalactosyl-(1-&gt;4)-beta-D-glucosyl-(1&lt;-&gt;1')-N-acylsphing-4-enine + adenosine 3',5'-bisphosphate + H(+). The protein operates within lipid metabolism; sphingolipid metabolism. Its function is as follows. Catalyzes the transfer of a sulfate group to position 3 of non-reducing beta-galactosyl residues in glycerolipids and sphingolipids, therefore participates in the biosynthesis of sulfoglycolipids. Catalyzes the synthesis of galactosylceramide sulfate (sulfatide), a major lipid component of the myelin sheath and of monogalactosylalkylacylglycerol sulfate (seminolipid), present in spermatocytes. Seems to prefer beta-glycosides at the non-reducing termini of sugar chains attached to a lipid moiety. Also acts on lactosylceramide, galactosyl 1-alkyl-2-sn-glycerol and galactosyl diacylglycerol (in vitro). The chain is Galactosylceramide sulfotransferase from Homo sapiens (Human).